The chain runs to 192 residues: Cytochrome c oxidase assembly factor 8 (192 aa).

The N-terminal 26 residues, 1 to 26 (MAALRPGSRALRRLLCRSFSGGGGVR), are a transit peptide targeting the mitochondrion.

Belongs to the COA8 family. In terms of processing, N-terminal mitochondrial targeting sequence is cleaved from the mature protein once in the mitochondrion. Post-translationally, in normal conditions, the cytoplasmic precursor protein is rapidly degraded by the ubiquitination-proteasome system (UPS). Oxidative stress induces protein stabilization and import into mitochondria where it protects COX from degradation. Expressed in atherosclerotic smooth muscle cells (at protein level). Expressed in aorta, brain, heart, kidney, liver, lung and spleen. Isoform 1 is strongly expressed in Kidney. Isoform 2 is strongly expressed in brain.

The protein resides in the mitochondrion inner membrane. In terms of biological role, required for cytochrome c complex (COX) IV assembly and function Protects COX assembly from oxidation-induced degradation, COX being the terminal component of the mitochondrial respiratory chain. The protein is Cytochrome c oxidase assembly factor 8 (Coa8) of Mus musculus (Mouse).